Consider the following 404-residue polypeptide: AT-hook motif nuclear-localized protein 6 (404 aa).

Residues 40–112 (TTVVTPLPPP…TPISSSIPLS (73 aa)) form a disordered region. The segment covering 45 to 55 (PLPPPPAPSSA) has biased composition (pro residues). Over residues 56 to 70 (PVPTTVTPGSATAST) the composition is skewed to low complexity. The Bipartite nuclear localization signal signature appears at 76–84 (KKKRGRPRK). A DNA-binding region (a.T hook) is located at residues 76-88 (KKKRGRPRKYAPD). Over residues 98–112 (PTLSPTPISSSIPLS) the composition is skewed to low complexity. The region spanning 157 to 299 (GANFTTHQFT…RVMEAFAPPQ (143 aa)) is the PPC domain. Residues 365 to 404 (AYHGYGNMNTGTTHKEEHEDEDGGDDDDDSGDTRSQSHSG) are disordered. Residues 382–394 (HEDEDGGDDDDDS) show a composition bias toward acidic residues.

Its subcellular location is the nucleus. In terms of biological role, transcription factor that specifically binds AT-rich DNA sequences related to the nuclear matrix attachment regions (MARs). This is AT-hook motif nuclear-localized protein 6 from Arabidopsis thaliana (Mouse-ear cress).